The primary structure comprises 940 residues: Coatomer subunit beta (940 aa).

HEAT repeat units lie at residues 11 to 48 (FLEA…NGDS), 90 to 125 (QEMI…KEPE), 126 to 162 (LLDP…VSNH), and 310 to 347 (SILE…SRNV).

As to quaternary structure, oligomeric complex that consists of at least the alpha, beta, beta', gamma, delta, epsilon and zeta subunits.

The protein resides in the cytoplasm. Its subcellular location is the golgi apparatus membrane. It is found in the cytoplasmic vesicle. The protein localises to the COPI-coated vesicle membrane. In terms of biological role, the coatomer is a cytosolic protein complex that binds to dilysine motifs and reversibly associates with Golgi non-clathrin-coated vesicles, which further mediate biosynthetic protein transport from the ER, via the Golgi up to the trans Golgi network. Coatomer complex is required for budding from Golgi membranes, and is essential for the retrograde Golgi-to-ER transport of dilysine-tagged proteins. The sequence is that of Coatomer subunit beta (sec26) from Schizosaccharomyces pombe (strain 972 / ATCC 24843) (Fission yeast).